We begin with the raw amino-acid sequence, 457 residues long: MNNNKRSKLSTVPSSRPIRVGFVGLTSGKSWVAKTHFLAIQQLSSQFQIVALYNPTLKSSLQTIEQLQLKHATGFDSLESFAQYKDIDMIVVSVKVPEHYEVVKNILEHSSQNLNLRYLYVEWALAASVQQAEELYSISQQRANLQTIICLQGRKSPYIVRAKELISEGCIGDINSIEISGNGGWYGYERPMRSPEYLYDIESGVNLISNSFGHTIDVLQYITGSYFQKINAMISNNIPTQFLLDENGKRTKETISKTCPDHLLFQGILENGKVPVSCSFKGGTPVKKLTKNLVIDIHGTKGDLKIEGDAGFVEISNLVLYFYGIKNGNGSSNGTDNNGAAAIKDKEKVTKSPSPSTGTSEEEQTMEVFHLRNYNSVVGNILRIYESIADYHFLGKPESKSSRGPDDLFASTKFDKQGFRFEGFPTFKDAIILHRLIDAVFRSDKEEKTLDVSKIMI.

The disordered stretch occupies residues 333-364 (NGTDNNGAAAIKDKEKVTKSPSPSTGTSEEEQ).

This sequence to yeast GAL80.

This protein is a negative regulator for the gene expression of the lactose/galactose metabolic genes. It seems to block activation by the transcriptional activator LAC9 in the absence of an inducing sugar. This chain is Galactose/lactose metabolism regulatory protein GAL80 (GAL80), found in Kluyveromyces lactis (strain ATCC 8585 / CBS 2359 / DSM 70799 / NBRC 1267 / NRRL Y-1140 / WM37) (Yeast).